The following is a 476-amino-acid chain: Cysteine--tRNA ligase (476 aa).

Zn(2+) is bound at residue C27. A 'HIGH' region motif is present at residues I29–H39. 3 residues coordinate Zn(2+): C213, H238, and E242. Positions K271 to S275 match the 'KMSKS' region motif. Position 274 (K274) interacts with ATP.

It belongs to the class-I aminoacyl-tRNA synthetase family. Zn(2+) serves as cofactor.

The protein resides in the cytoplasm. The catalysed reaction is tRNA(Cys) + L-cysteine + ATP = L-cysteinyl-tRNA(Cys) + AMP + diphosphate. The protein is Cysteine--tRNA ligase of Pyrobaculum arsenaticum (strain DSM 13514 / JCM 11321 / PZ6).